The sequence spans 214 residues: Octanoyltransferase (214 aa).

The BPL/LPL catalytic domain occupies Lys-35–Phe-211. Substrate is bound by residues Arg-75–His-82, Ser-142–Gly-144, and Gly-155–Ser-157. The Acyl-thioester intermediate role is filled by Cys-173.

This sequence belongs to the LipB family.

It is found in the cytoplasm. The catalysed reaction is octanoyl-[ACP] + L-lysyl-[protein] = N(6)-octanoyl-L-lysyl-[protein] + holo-[ACP] + H(+). The protein operates within protein modification; protein lipoylation via endogenous pathway; protein N(6)-(lipoyl)lysine from octanoyl-[acyl-carrier-protein]: step 1/2. Catalyzes the transfer of endogenously produced octanoic acid from octanoyl-acyl-carrier-protein onto the lipoyl domains of lipoate-dependent enzymes. Lipoyl-ACP can also act as a substrate although octanoyl-ACP is likely to be the physiological substrate. This is Octanoyltransferase from Prochlorococcus marinus (strain MIT 9515).